The sequence spans 191 residues: Adenine phosphoribosyltransferase (191 aa).

This sequence belongs to the purine/pyrimidine phosphoribosyltransferase family. Homodimer.

The protein resides in the cytoplasm. It catalyses the reaction AMP + diphosphate = 5-phospho-alpha-D-ribose 1-diphosphate + adenine. It functions in the pathway purine metabolism; AMP biosynthesis via salvage pathway; AMP from adenine: step 1/1. Functionally, catalyzes a salvage reaction resulting in the formation of AMP, that is energically less costly than de novo synthesis. The protein is Adenine phosphoribosyltransferase of Bordetella bronchiseptica (strain ATCC BAA-588 / NCTC 13252 / RB50) (Alcaligenes bronchisepticus).